The sequence spans 332 residues: Phenol 2-monooxygenase, oxygenase component MhpL (332 aa).

Belongs to the TmoE/XamoE family.

The enzyme catalyses phenol + NADH + O2 + H(+) = catechol + NAD(+) + H2O. Its pathway is aromatic compound metabolism; phenol degradation. Part of a multicomponent enzyme which catalyzes the degradation of phenol and some of its methylated derivatives. In Acinetobacter pittii (strain PHEA-2), this protein is Phenol 2-monooxygenase, oxygenase component MhpL (mphL).